The sequence spans 340 residues: Glycerol-3-phosphate dehydrogenase [NAD(P)+] (340 aa).

4 residues coordinate NADPH: Ser14, Phe15, Arg35, and Lys108. Sn-glycerol 3-phosphate-binding residues include Lys108 and Gly136. Ala140 serves as a coordination point for NADPH. Sn-glycerol 3-phosphate is bound by residues Lys191, Asp244, Ser254, Arg255, and Asn256. Residue Lys191 is the Proton acceptor of the active site. An NADPH-binding site is contributed by Arg255. Glu281 contacts NADPH.

It belongs to the NAD-dependent glycerol-3-phosphate dehydrogenase family.

The protein resides in the cytoplasm. It catalyses the reaction sn-glycerol 3-phosphate + NAD(+) = dihydroxyacetone phosphate + NADH + H(+). The enzyme catalyses sn-glycerol 3-phosphate + NADP(+) = dihydroxyacetone phosphate + NADPH + H(+). It functions in the pathway membrane lipid metabolism; glycerophospholipid metabolism. Its function is as follows. Catalyzes the reduction of the glycolytic intermediate dihydroxyacetone phosphate (DHAP) to sn-glycerol 3-phosphate (G3P), the key precursor for phospholipid synthesis. The sequence is that of Glycerol-3-phosphate dehydrogenase [NAD(P)+] from Pseudomonas aeruginosa (strain LESB58).